A 139-amino-acid polypeptide reads, in one-letter code: 3-hydroxyacyl-[acyl-carrier-protein] dehydratase FabZ (139 aa).

H46 is an active-site residue.

This sequence belongs to the thioester dehydratase family. FabZ subfamily.

The protein resides in the cytoplasm. It catalyses the reaction a (3R)-hydroxyacyl-[ACP] = a (2E)-enoyl-[ACP] + H2O. Involved in unsaturated fatty acids biosynthesis. Catalyzes the dehydration of short chain beta-hydroxyacyl-ACPs and long chain saturated and unsaturated beta-hydroxyacyl-ACPs. The sequence is that of 3-hydroxyacyl-[acyl-carrier-protein] dehydratase FabZ from Streptococcus pyogenes serotype M1.